Reading from the N-terminus, the 455-residue chain is tRNA modification GTPase MnmE (455 aa).

(6S)-5-formyl-5,6,7,8-tetrahydrofolate contacts are provided by Arg26, Glu86, and Arg125. A TrmE-type G domain is found at 222–376 (GLKTAIIGRP…VEEKINQIFF (155 aa)). Asn232 is a K(+) binding site. GTP contacts are provided by residues 232-237 (NVGKSS), 251-257 (TDIAGTT), and 276-279 (DTAG). Ser236 lines the Mg(2+) pocket. Thr251, Ile253, and Thr256 together coordinate K(+). Thr257 is a Mg(2+) binding site. Lys455 lines the (6S)-5-formyl-5,6,7,8-tetrahydrofolate pocket.

The protein belongs to the TRAFAC class TrmE-Era-EngA-EngB-Septin-like GTPase superfamily. TrmE GTPase family. In terms of assembly, homodimer. Heterotetramer of two MnmE and two MnmG subunits. It depends on K(+) as a cofactor.

It is found in the cytoplasm. Exhibits a very high intrinsic GTPase hydrolysis rate. Involved in the addition of a carboxymethylaminomethyl (cmnm) group at the wobble position (U34) of certain tRNAs, forming tRNA-cmnm(5)s(2)U34. This is tRNA modification GTPase MnmE from Lactococcus lactis subsp. lactis (strain IL1403) (Streptococcus lactis).